Reading from the N-terminus, the 546-residue chain is Pectinesterase 1 (546 aa).

The N-terminal stretch at 1 to 39 is a signal peptide; sequence MANPQQPLLIKTHKQNPIISFKILSFVITLFVALFLVAP. Residues 40 to 229 constitute a propeptide that is removed on maturation; sequence YQVEIKHSNL…RKLMESSGKD (190 aa). Substrate-binding residues include Thr308 and Gln338. Cysteines 327 and 354 form a disulfide. The Proton donor role is filled by Asp361. The active-site Nucleophile is the Asp382. Cysteines 395 and 429 form a disulfide. 2 residues coordinate substrate: Arg450 and Trp452.

This sequence in the N-terminal section; belongs to the PMEI family. It in the C-terminal section; belongs to the pectinesterase family.

The protein resides in the secreted. Its subcellular location is the cell wall. It carries out the reaction [(1-&gt;4)-alpha-D-galacturonosyl methyl ester](n) + n H2O = [(1-&gt;4)-alpha-D-galacturonosyl](n) + n methanol + n H(+). The protein operates within glycan metabolism; pectin degradation; 2-dehydro-3-deoxy-D-gluconate from pectin: step 1/5. Its function is as follows. Pectinesterase may play a role in cell wall metabolism during fruit growth and development prior to ripening and may be required for preparing cell walls for softening by polygalacturonase during fruit ripening. The protein is Pectinesterase 1 (PME1.9) of Solanum lycopersicum (Tomato).